The following is a 347-amino-acid chain: Adenine deaminase (347 aa).

Zn(2+) is bound by residues H16, H18, and H204. E207 (proton donor) is an active-site residue. D285 lines the Zn(2+) pocket. D286 contacts substrate.

It belongs to the metallo-dependent hydrolases superfamily. Adenosine and AMP deaminases family. Adenine deaminase type 2 subfamily. The cofactor is Zn(2+).

It is found in the cytoplasm. It localises to the nucleus. The enzyme catalyses adenine + H2O + H(+) = hypoxanthine + NH4(+). Catalyzes the hydrolytic deamination of adenine to hypoxanthine. Plays an important role in the purine salvage pathway and in nitrogen catabolism. This Candida glabrata (strain ATCC 2001 / BCRC 20586 / JCM 3761 / NBRC 0622 / NRRL Y-65 / CBS 138) (Yeast) protein is Adenine deaminase.